Reading from the N-terminus, the 439-residue chain is Dolichyl-diphosphooligosaccharide--protein glycosyltransferase 48 kDa subunit (439 aa).

Positions 1–26 (MATRAARVWSGWWLLLLPLLGLAGAS) are cleaved as a signal peptide. At 27 to 409 (GPRTLVLLDN…QYERFIPSAY (383 aa)) the chain is on the lumenal side. Residues 410-430 (PYYASAFSMMLGLFIFSVVFL) traverse the membrane as a helical segment. The Cytoplasmic portion of the chain corresponds to 431 to 439 (HMKEKEKSD).

This sequence belongs to the DDOST 48 kDa subunit family. As to quaternary structure, component of the oligosaccharyltransferase (OST) complex. OST exists in two different complex forms which contain common core subunits RPN1, RPN2, OST48, OST4, DAD1 and TMEM258, either STT3A or STT3B as catalytic subunits, and form-specific accessory subunits. STT3A complex assembly occurs through the formation of 3 subcomplexes. Subcomplex 1 contains RPN1 and TMEM258, subcomplex 2 contains the STT3A-specific subunits STT3A, DC2/OSTC, and KCP2 as well as the core subunit OST4, and subcomplex 3 contains RPN2, DAD1, and OST48. The STT3A complex can form stable complexes with the Sec61 complex or with both the Sec61 and TRAP complexes. Interacts with SMIM22.

It is found in the endoplasmic reticulum membrane. It functions in the pathway protein modification; protein glycosylation. Subunit of the oligosaccharyl transferase (OST) complex that catalyzes the initial transfer of a defined glycan (Glc(3)Man(9)GlcNAc(2) in eukaryotes) from the lipid carrier dolichol-pyrophosphate to an asparagine residue within an Asn-X-Ser/Thr consensus motif in nascent polypeptide chains, the first step in protein N-glycosylation. N-glycosylation occurs cotranslationally and the complex associates with the Sec61 complex at the channel-forming translocon complex that mediates protein translocation across the endoplasmic reticulum (ER). All subunits are required for a maximal enzyme activity. Required for the assembly of both SST3A- and SS3B-containing OST complexes. This is Dolichyl-diphosphooligosaccharide--protein glycosyltransferase 48 kDa subunit from Bos taurus (Bovine).